We begin with the raw amino-acid sequence, 528 residues long: UDP-glucuronosyltransferase 2B19 (528 aa).

The first 21 residues, 1 to 21 (MSMKWTSALLLIQLSCYLSFG), serve as a signal peptide directing secretion. Residue Lys-135 is modified to N6-succinyllysine. The N-linked (GlcNAc...) asparagine glycan is linked to Asn-315. The helical transmembrane segment at 493–513 (VIGFLLACVATVIFIITKCLF) threads the bilayer.

It belongs to the UDP-glycosyltransferase family. Expressed in liver, ovary, prostate, colon, kidney, pancreas, brain, cerebellum, mammary gland and epididymis. Not expressed in small intestine, spleen, bladder, adrenal gland and testis.

The protein resides in the microsome membrane. The protein localises to the endoplasmic reticulum membrane. The catalysed reaction is glucuronate acceptor + UDP-alpha-D-glucuronate = acceptor beta-D-glucuronoside + UDP + H(+). Its function is as follows. UDPGT is of major importance in the conjugation and subsequent elimination of potentially toxic xenobiotics and endogenous compounds. This isozyme displays activity toward several classes of xenobiotic substrates: eugenol, 4-methyllumbelliferone, p-nitrophenol, 1-naphthol, p,p'-biphenol, naringenin and o,o'-biphenol. Active also on 3a-hydroxy and 17b-hydroxy positions of steroids. In terms of biological role, contributes to the formation of androgen glucuronide in extrahepatic steroid target tissues such as the prostate. This chain is UDP-glucuronosyltransferase 2B19 (UGT2B19), found in Macaca fascicularis (Crab-eating macaque).